The following is an 87-amino-acid chain: Guanine nucleotide-binding protein subunit gamma (87 aa).

Cysteine 84 is modified (cysteine methyl ester). Cysteine 84 carries the S-geranylgeranyl cysteine lipid modification. Residues leucine 85–valine 87 constitute a propeptide, removed in mature form.

It belongs to the G protein gamma family. G proteins are composed of 3 units, alpha, beta and gamma. The N-terminus is blocked.

The protein resides in the cell membrane. Functionally, guanine nucleotide-binding proteins (G proteins) are involved as a modulator or transducer in various transmembrane signaling systems. This major G-protein of the squid photoreceptor is involved in visual transduction. The beta and gamma chains are required for the GTPase activity, for replacement of GDP by GTP, and for G protein-effector interaction. The protein is Guanine nucleotide-binding protein subunit gamma of Loligo forbesii (Veined squid).